The primary structure comprises 647 residues: Bifunctional enzyme CysN/CysC (647 aa).

The tract at residues 1–472 (MSHQSDLIAT…TEERAARFGQ (472 aa)) is sulfate adenylyltransferase. The tr-type G domain maps to 22 to 239 (KQLLRFITCG…LETVYIGSDR (218 aa)). The G1 stretch occupies residues 31–38 (GSVDDGKS). 31–38 (GSVDDGKS) lines the GTP pocket. Positions 89–93 (GITID) are G2. Residues 110 to 113 (DTPG) form a G3 region. Residues 110 to 114 (DTPGH) and 165 to 168 (NKMD) contribute to the GTP site. Residues 165–168 (NKMD) form a G4 region. Positions 204–206 (SAL) are G5. Positions 473–614 (KPATVLLTGL…FPGVTAKYDV (142 aa)) are adenylyl-sulfate kinase. 481 to 488 (GLTGSGKT) lines the ATP pocket.

The protein in the C-terminal section; belongs to the APS kinase family. This sequence in the N-terminal section; belongs to the TRAFAC class translation factor GTPase superfamily. Classic translation factor GTPase family. CysN/NodQ subfamily. In terms of assembly, heterodimer composed of CysD, the smaller subunit, and CysNC.

The enzyme catalyses sulfate + ATP + H(+) = adenosine 5'-phosphosulfate + diphosphate. It carries out the reaction adenosine 5'-phosphosulfate + ATP = 3'-phosphoadenylyl sulfate + ADP + H(+). It participates in sulfur metabolism; hydrogen sulfide biosynthesis; sulfite from sulfate: step 1/3. Its pathway is sulfur metabolism; hydrogen sulfide biosynthesis; sulfite from sulfate: step 2/3. In terms of biological role, with CysD forms the ATP sulfurylase (ATPS) that catalyzes the adenylation of sulfate producing adenosine 5'-phosphosulfate (APS) and diphosphate, the first enzymatic step in sulfur assimilation pathway. APS synthesis involves the formation of a high-energy phosphoric-sulfuric acid anhydride bond driven by GTP hydrolysis by CysN coupled to ATP hydrolysis by CysD. APS kinase catalyzes the synthesis of activated sulfate. In Rhodopirellula baltica (strain DSM 10527 / NCIMB 13988 / SH1), this protein is Bifunctional enzyme CysN/CysC (cysNC).